Here is a 387-residue protein sequence, read N- to C-terminus: F-box/LRR-repeat/kelch-repeat protein At2g29770 (387 aa).

The interval 1–34 is disordered; it reads MVFISETSDDGSNGGDPTKNPQEEEEENLPPIPQ. Positions 31–78 constitute an F-box domain; sequence PIPQGIPDELIESTVLLIRRCHYPTLSLLSKTFRRVISSSELYKSRFI. An LRR 1 repeat occupies 105 to 128; it reads CNIPRNISLHLREIKSLPPLNHGS. Kelch repeat units follow at residues 136–183 and 184–231; these read HMYV…VIDG and RIYV…FVTS. An LRR 2 repeat occupies 196 to 219; sequence DHWIEVFDIENRIWSSVPHHRYCN.

In Arabidopsis thaliana (Mouse-ear cress), this protein is F-box/LRR-repeat/kelch-repeat protein At2g29770.